Reading from the N-terminus, the 267-residue chain is Ras-related protein Rab-36 (267 aa).

Valine 68, glycine 69, lysine 70, threonine 71, serine 72, aspartate 83, tyrosine 86, and threonine 89 together coordinate GTP. Residue threonine 71 participates in Mg(2+) binding. A Switch 1 motif is present at residues 76–94 (RLCKNVFDHDYKATIGVDF). Residues threonine 89 and aspartate 112 each contribute to the Mg(2+) site. The Switch 2 motif lies at 113–132 (TAGQEKFKCIASAYYRGAQV). GTP contacts are provided by glycine 115, lysine 172, aspartate 174, serine 203, alanine 204, and lysine 205. S-geranylgeranyl cysteine attachment occurs at residues cysteine 266 and cysteine 267.

This sequence belongs to the small GTPase superfamily. Rab family. Mg(2+) serves as cofactor.

The protein resides in the golgi apparatus membrane. The catalysed reaction is GTP + H2O = GDP + phosphate + H(+). Regulated by guanine nucleotide exchange factors (GEFs) which promote the exchange of bound GDP for free GTP. Regulated by GTPase activating proteins (GAPs) which increase the GTP hydrolysis activity. Inhibited by GDP dissociation inhibitors (GDIs). Functionally, the small GTPases Rab are key regulators of intracellular membrane trafficking, from the formation of transport vesicles to their fusion with membranes. Rabs cycle between an inactive GDP-bound form and an active GTP-bound form that is able to recruit to membranes different sets of downstream effectors directly responsible for vesicle formation, movement, tethering and fusion. This Mus musculus (Mouse) protein is Ras-related protein Rab-36.